The primary structure comprises 503 residues: Intracellular exo-alpha-(1-&gt;5)-L-arabinofuranosidase (503 aa).

Alpha-L-arabinofuranose is bound by residues glutamate 27, asparagine 72, and asparagine 172. Glutamate 173 serves as the catalytic Proton donor/acceptor. Alpha-L-arabinofuranose is bound by residues tyrosine 244, glutamate 292, and glutamine 352. The active-site Nucleophile is glutamate 292.

This sequence belongs to the glycosyl hydrolase 51 family. In terms of assembly, homohexamer; trimer of dimers.

The protein resides in the cytoplasm. The enzyme catalyses Hydrolysis of terminal non-reducing alpha-L-arabinofuranoside residues in alpha-L-arabinosides.. It functions in the pathway glycan metabolism; L-arabinan degradation. In terms of biological role, involved in the degradation of arabinan and is a key enzyme in the complete degradation of the plant cell wall. Catalyzes the cleavage of terminal alpha-(1-&gt;5)-arabinofuranosyl bonds in small oligosaccharides as alpha-(1-&gt;5)-linked arabinobiose/arabinotriose, but does not display significant activity against linear non-substituted arabinan. It is also highly efficient in the cleavage of alpha-(1-&gt;3)-linked arabinoside of xylobiose and of the alpha-(1-&gt;3)-linked arabinoside decorations of polymeric wheat arabinoxylan. It exhibits very low activity against sugar beet arabinan. The polypeptide is Intracellular exo-alpha-(1-&gt;5)-L-arabinofuranosidase (Acetivibrio thermocellus (strain ATCC 27405 / DSM 1237 / JCM 9322 / NBRC 103400 / NCIMB 10682 / NRRL B-4536 / VPI 7372) (Clostridium thermocellum)).